Reading from the N-terminus, the 250-residue chain is MSFTVIIPARLASTRLPNKPLADLGGKPMIVRVAERAMQSGAAQVIVATDHADIFAACVQHKVAVQMTRADHPSGTDRIAEVAALIGLPDEAVVVNVQGDEPLIDPSLIAATATLISRDVPMATAAHAISEIEEVFNPNVVKVVLDKSGRALYFSRATIPWHRDGFAVSKDAIPAGYAPLRHIGLYAYRNAFLQEYPQLSVSPLEQLEALEQLRVLWHGVPIAVHVTPHAPVTGVDTPEDLQRVRQFFAQ.

This sequence belongs to the KdsB family.

Its subcellular location is the cytoplasm. It catalyses the reaction 3-deoxy-alpha-D-manno-oct-2-ulosonate + CTP = CMP-3-deoxy-beta-D-manno-octulosonate + diphosphate. The protein operates within nucleotide-sugar biosynthesis; CMP-3-deoxy-D-manno-octulosonate biosynthesis; CMP-3-deoxy-D-manno-octulosonate from 3-deoxy-D-manno-octulosonate and CTP: step 1/1. It participates in bacterial outer membrane biogenesis; lipopolysaccharide biosynthesis. Functionally, activates KDO (a required 8-carbon sugar) for incorporation into bacterial lipopolysaccharide in Gram-negative bacteria. This Janthinobacterium sp. (strain Marseille) (Minibacterium massiliensis) protein is 3-deoxy-manno-octulosonate cytidylyltransferase.